The sequence spans 265 residues: MDEVSRSHTPQFLSSDHQHYHHQNAGRQKRGREEEGVEPNNIGEDLATFPSGEENIKKRRPRGRPAGSKNKPKAPIIVTRDSANAFRCHVMEITNACDVMESLAVFARRRQRGVCVLTGNGAVTNVTVRQPGGGVVSLHGRFEILSLSGSFLPPPAPPAASGLKVYLAGGQGQVIGGSVVGPLTASSPVVVMAASFGNASYERLPLEEEEETEREIDGNAARAIGTQTQKQLMQDATSFIGSPSNLINSVSLPGEAYWGTQRPSF.

The tract at residues 1–75 (MDEVSRSHTP…AGSKNKPKAP (75 aa)) is disordered. The span at 19 to 30 (HYHHQNAGRQKR) shows a compositional bias: basic residues. Positions 59–71 (RRPRGRPAGSKNK) form a DNA-binding region, a.T hook. The PPC domain occupies 83–217 (ANAFRCHVME…EEEETEREID (135 aa)).

Its subcellular location is the nucleus. Transcription factor that specifically binds AT-rich DNA sequences related to the nuclear matrix attachment regions (MARs). Acts redundantly with AHL22, AHL27 and AHL29 in the regulation of flowering and regulation of the hypocotyl elongation. This Arabidopsis thaliana (Mouse-ear cress) protein is AT-hook motif nuclear-localized protein 18.